The sequence spans 483 residues: V-type proton ATPase subunit H (483 aa).

2 positions are modified to phosphoserine: Ser-59 and Ser-483.

Belongs to the V-ATPase H subunit family. As to quaternary structure, V-ATPase is a heteromultimeric enzyme made up of two complexes: the ATP-hydrolytic V1 complex and the proton translocation V0 complex. The V1 complex consists of three catalytic AB heterodimers that form a heterohexamer, three peripheral stalks each consisting of EG heterodimers, one central rotor including subunits D and F, and the regulatory subunits C and H. The proton translocation complex V0 consists of the proton transport subunit a, a ring of proteolipid subunits c9c'', rotary subunit d, subunits e and f, and the accessory subunits ATP6AP1/Ac45 and ATP6AP2/PRR. Interacts with AP2M1.

It localises to the cytoplasmic vesicle. The protein localises to the clathrin-coated vesicle membrane. In terms of biological role, subunit of the V1 complex of vacuolar(H+)-ATPase (V-ATPase), a multisubunit enzyme composed of a peripheral complex (V1) that hydrolyzes ATP and a membrane integral complex (V0) that translocates protons. V-ATPase is responsible for acidifying and maintaining the pH of intracellular compartments and in some cell types, is targeted to the plasma membrane, where it is responsible for acidifying the extracellular environment. Subunit H is essential for V-ATPase activity, but not for the assembly of the complex. Involved in the endocytosis mediated by clathrin-coated pits, required for the formation of endosomes. In Mus musculus (Mouse), this protein is V-type proton ATPase subunit H (Atp6v1h).